The sequence spans 276 residues: Large ribosomal subunit protein uL2 (276 aa).

The disordered stretch occupies residues 226-276 (MNSVDHPHGGGEGKTSGGRHPVSPWGTPTKGYKTRSNKRTDKLILRHRNKG).

The protein belongs to the universal ribosomal protein uL2 family. Part of the 50S ribosomal subunit. Forms a bridge to the 30S subunit in the 70S ribosome.

Functionally, one of the primary rRNA binding proteins. Required for association of the 30S and 50S subunits to form the 70S ribosome, for tRNA binding and peptide bond formation. It has been suggested to have peptidyltransferase activity; this is somewhat controversial. Makes several contacts with the 16S rRNA in the 70S ribosome. The chain is Large ribosomal subunit protein uL2 from Vesicomyosocius okutanii subsp. Calyptogena okutanii (strain HA).